A 221-amino-acid chain; its full sequence is Putative efflux system component YhbJ (221 aa).

A helical membrane pass occupies residues 17–37 (LILTNIIGLIVVLAIIAGGAY).

The protein belongs to the membrane fusion protein (MFP) (TC 8.A.1) family.

It localises to the cell membrane. This Bacillus subtilis (strain 168) protein is Putative efflux system component YhbJ (yhbJ).